Here is a 201-residue protein sequence, read N- to C-terminus: Histone chaperone asf1a-A (201 aa).

It belongs to the ASF1 family. In terms of assembly, interacts with histone H3 (including both histone H3.1 and H3.3) and histone H4. Interacts with hira and p60.

It is found in the nucleus. Histone chaperone that facilitates histone deposition and histone exchange and removal during nucleosome assembly and disassembly. Not critical for histone deposition during nucleosome assembly. In Xenopus laevis (African clawed frog), this protein is Histone chaperone asf1a-A (asf1aa).